We begin with the raw amino-acid sequence, 385 residues long: U6 small nuclear RNA (adenine-(43)-N(6))-methyltransferase (385 aa).

4 residues coordinate S-adenosyl-L-methionine: arginine 54, glycine 83, glutamate 106, and asparagine 155.

Belongs to the methyltransferase superfamily. METTL16/RlmF family.

The protein resides in the cytoplasm. The protein localises to the nucleus. It carries out the reaction adenosine in U6 snRNA + S-adenosyl-L-methionine = N(6)-methyladenosine in U6 snRNA + S-adenosyl-L-homocysteine + H(+). Its function is as follows. RNA N6-methyltransferase that mediates N6-methylation of adenine of U6 small nuclear RNA (U6 snRNA). This Schizosaccharomyces pombe (strain 972 / ATCC 24843) (Fission yeast) protein is U6 small nuclear RNA (adenine-(43)-N(6))-methyltransferase.